A 119-amino-acid polypeptide reads, in one-letter code: Large ribosomal subunit protein bL19 (119 aa).

The protein belongs to the bacterial ribosomal protein bL19 family.

Functionally, this protein is located at the 30S-50S ribosomal subunit interface and may play a role in the structure and function of the aminoacyl-tRNA binding site. This chain is Large ribosomal subunit protein bL19, found in Psychromonas ingrahamii (strain DSM 17664 / CCUG 51855 / 37).